The sequence spans 642 residues: Threonine--tRNA ligase (642 aa).

The TGS domain occupies 1–61 (MPVITLPDGS…ENDAQLSIIT (61 aa)). A catalytic region spans residues 243–534 (DHRKIGKQLD…LTEEFAGFFP (292 aa)). Zn(2+)-binding residues include Cys334, His385, and His511.

This sequence belongs to the class-II aminoacyl-tRNA synthetase family. As to quaternary structure, homodimer. The cofactor is Zn(2+).

It localises to the cytoplasm. The enzyme catalyses tRNA(Thr) + L-threonine + ATP = L-threonyl-tRNA(Thr) + AMP + diphosphate + H(+). Functionally, catalyzes the attachment of threonine to tRNA(Thr) in a two-step reaction: L-threonine is first activated by ATP to form Thr-AMP and then transferred to the acceptor end of tRNA(Thr). Also edits incorrectly charged L-seryl-tRNA(Thr). The protein is Threonine--tRNA ligase of Enterobacter sp. (strain 638).